The primary structure comprises 319 residues: MFKFDREQMVVEIAGRKIGGQPGEYPTALAGTIFYARHKIVEDERKGIFDKAAAEDLINKQAEMEDITGNPALVQVFGGTPEALVNYIDFVAEVWDGPMLLDSTSGEARMAAAKRATEAGYAKQCIYNSINVSIDEQEYQVLVESDLEASIVLCFDPMDPTVEGKINVLTNGGKTADKGMLELAEKAGIKYPLIDTAVTPLGNGAGAAVRASFAVKALFGYPVGSGIHNIPSAWDWLREFRKQLREAGEREKAKDIHHVCDVGANLVQVMASGDFVLYGPIDNAYMTFPAVAMVDAIIAEAAKELGIEPIDTHPFKKLV.

This sequence belongs to the MtrH family. The complex is composed of 8 subunits; MtrA, MtrB, MtrC, MtrD, MtrE, MtrF, MtrG and MtrH.

The enzyme catalyses 5-methyl-5,6,7,8-tetrahydromethanopterin + coenzyme M + 2 Na(+)(in) = 5,6,7,8-tetrahydromethanopterin + methyl-coenzyme M + 2 Na(+)(out). Its pathway is one-carbon metabolism; methanogenesis from CO(2); methyl-coenzyme M from 5,10-methylene-5,6,7,8-tetrahydromethanopterin: step 2/2. In terms of biological role, part of a complex that catalyzes the formation of methyl-coenzyme M and tetrahydromethanopterin from coenzyme M and methyl-tetrahydromethanopterin. This is an energy-conserving, sodium-ion translocating step. MtrH catalyzes the transfer of the methyl group from methyl-tetrahydromethanopterin to the corrinoid prosthetic group of MtrA. This Methanocaldococcus jannaschii (strain ATCC 43067 / DSM 2661 / JAL-1 / JCM 10045 / NBRC 100440) (Methanococcus jannaschii) protein is Tetrahydromethanopterin S-methyltransferase subunit H.